We begin with the raw amino-acid sequence, 694 residues long: Putative L-type lectin-domain containing receptor kinase II.2 (694 aa).

Residues 1–24 (MAGVLRSLRFWMIICVQVLSLVLA) form the signal peptide. Over 25–318 (QDRDEFVYHD…PTSRSKDSKN (294 aa)) the chain is Extracellular. Residues 27–272 (RDEFVYHDFS…DQYILGWSFK (246 aa)) are legume-lectin like. N-linked (GlcNAc...) asparagine glycosylation is found at Asn-57, Asn-58, Asn-73, Asn-131, Asn-172, Asn-183, Asn-201, Asn-208, Asn-240, and Asn-246. The disordered stretch occupies residues 283–314 (SKILDPPNRPPPPSSPPPPPPPPPTPPTSRSK). Residues 289–309 (PNRPPPPSSPPPPPPPPPTPP) are compositionally biased toward pro residues. A helical membrane pass occupies residues 319–339 (IIIICVTVTSIAFLLMLGGFL). Residues 340–694 (YLYKKKKYAE…EDVTILFGGR (355 aa)) are Cytoplasmic-facing. In terms of domain architecture, Protein kinase spans 375–650 (FRENRLLGAG…IQYLEGNATI (276 aa)). ATP is bound by residues 381–389 (LGAGGFGKV) and Lys-403. The active-site Proton acceptor is the Asp-500.

In the C-terminal section; belongs to the protein kinase superfamily. Ser/Thr protein kinase family. This sequence in the N-terminal section; belongs to the leguminous lectin family.

The protein localises to the cell membrane. The catalysed reaction is L-seryl-[protein] + ATP = O-phospho-L-seryl-[protein] + ADP + H(+). It catalyses the reaction L-threonyl-[protein] + ATP = O-phospho-L-threonyl-[protein] + ADP + H(+). This is Putative L-type lectin-domain containing receptor kinase II.2 (LECRK22) from Arabidopsis thaliana (Mouse-ear cress).